The sequence spans 308 residues: Ribonuclease Z (308 aa).

Zn(2+) is bound by residues H61, H63, D65, H66, H142, D211, and H270. D65 (proton acceptor) is an active-site residue.

It belongs to the RNase Z family. Homodimer. The cofactor is Zn(2+).

The catalysed reaction is Endonucleolytic cleavage of RNA, removing extra 3' nucleotides from tRNA precursor, generating 3' termini of tRNAs. A 3'-hydroxy group is left at the tRNA terminus and a 5'-phosphoryl group is left at the trailer molecule.. In terms of biological role, zinc phosphodiesterase, which displays some tRNA 3'-processing endonuclease activity. Probably involved in tRNA maturation, by removing a 3'-trailer from precursor tRNA. The protein is Ribonuclease Z of Clostridium beijerinckii (strain ATCC 51743 / NCIMB 8052) (Clostridium acetobutylicum).